A 560-amino-acid chain; its full sequence is Dihydroxy-acid dehydratase (560 aa).

Residue Cys52 participates in [2Fe-2S] cluster binding. Asp84 contacts Mg(2+). Cys125 lines the [2Fe-2S] cluster pocket. Positions 126 and 127 each coordinate Mg(2+). The residue at position 127 (Lys127) is an N6-carboxylysine. Cys197 is a [2Fe-2S] cluster binding site. Mg(2+) is bound at residue Glu448. Catalysis depends on Ser474, which acts as the Proton acceptor.

Belongs to the IlvD/Edd family. As to quaternary structure, homodimer. [2Fe-2S] cluster serves as cofactor. Mg(2+) is required as a cofactor.

It catalyses the reaction (2R)-2,3-dihydroxy-3-methylbutanoate = 3-methyl-2-oxobutanoate + H2O. The enzyme catalyses (2R,3R)-2,3-dihydroxy-3-methylpentanoate = (S)-3-methyl-2-oxopentanoate + H2O. It participates in amino-acid biosynthesis; L-isoleucine biosynthesis; L-isoleucine from 2-oxobutanoate: step 3/4. It functions in the pathway amino-acid biosynthesis; L-valine biosynthesis; L-valine from pyruvate: step 3/4. Functions in the biosynthesis of branched-chain amino acids. Catalyzes the dehydration of (2R,3R)-2,3-dihydroxy-3-methylpentanoate (2,3-dihydroxy-3-methylvalerate) into 2-oxo-3-methylpentanoate (2-oxo-3-methylvalerate) and of (2R)-2,3-dihydroxy-3-methylbutanoate (2,3-dihydroxyisovalerate) into 2-oxo-3-methylbutanoate (2-oxoisovalerate), the penultimate precursor to L-isoleucine and L-valine, respectively. This is Dihydroxy-acid dehydratase from Francisella tularensis subsp. tularensis (strain WY96-3418).